The primary structure comprises 330 residues: Probable deoxyhypusine synthase (330 aa).

A disordered region spans residues 1–25; it reads MTGDDADETHENVVPGSDEDLDTPD. The active-site Nucleophile is the Lys298.

The protein belongs to the deoxyhypusine synthase family. NAD(+) is required as a cofactor.

The catalysed reaction is [eIF5A protein]-L-lysine + spermidine = [eIF5A protein]-deoxyhypusine + propane-1,3-diamine. It functions in the pathway protein modification; eIF5A hypusination. In terms of biological role, catalyzes the NAD-dependent oxidative cleavage of spermidine and the subsequent transfer of the butylamine moiety of spermidine to the epsilon-amino group of a specific lysine residue of the eIF-5A precursor protein to form the intermediate deoxyhypusine residue. In Halobacterium salinarum (strain ATCC 29341 / DSM 671 / R1), this protein is Probable deoxyhypusine synthase.